The primary structure comprises 426 residues: Histidine--tRNA ligase (426 aa).

This sequence belongs to the class-II aminoacyl-tRNA synthetase family. As to quaternary structure, homodimer.

It localises to the cytoplasm. The enzyme catalyses tRNA(His) + L-histidine + ATP = L-histidyl-tRNA(His) + AMP + diphosphate + H(+). This is Histidine--tRNA ligase from Chlorobium phaeovibrioides (strain DSM 265 / 1930) (Prosthecochloris vibrioformis (strain DSM 265)).